The primary structure comprises 528 residues: Adhesion G-protein coupled receptor G5 (528 aa).

A signal peptide spans 1–21 (MDHCGALFLCLCLLTLQNATT). The Extracellular segment spans residues 22–245 (ETWEELLSYM…SPALVPAELL (224 aa)). Residues asparagine 58, asparagine 65, asparagine 146, asparagine 147, asparagine 173, and asparagine 179 are each glycosylated (N-linked (GlcNAc...) asparagine). The 162-residue stretch at 78–239 (FKLSCDFSGL…AVLMQLSPAL (162 aa)) folds into the GAIN-B domain. 2 disulfide bridges follow: cysteine 189/cysteine 221 and cysteine 209/cysteine 223. Residues 189–239 (CVFWKEGARKQPWGGWSPEGCRTEQPSHSQVLCRCNHLTYFAVLMQLSPAL) form a GPS region. Residues 228 to 236 (YFAVLMQLS) form a stachel region. Residues 246–271 (APLTYISLVGCSISIVASLITVLLHF) form a helical membrane-spanning segment. The Cytoplasmic portion of the chain corresponds to 272-280 (HFRKQSDSL). Residues 281–304 (TRIHMNLHASVLLLNIAFLLSPAF) form a helical membrane-spanning segment. Residues 305–314 (AMSPVPGSAC) are Extracellular-facing. A disulfide bridge connects residues cysteine 314 and cysteine 404. The helical transmembrane segment at 315 to 340 (TALAAALHYALLSCLTWMAIEGFNLY) threads the bilayer. Topologically, residues 341 to 353 (LLLGRVYNIYIRR) are cytoplasmic. A helical transmembrane segment spans residues 354–377 (YVFKLGVLGWGAPALLVLLSLSVK). Topologically, residues 378–410 (SSVYGPCTIPVFDSWENGTGFQNMSICWVRSPV) are extracellular. Asparagine 394 and asparagine 400 each carry an N-linked (GlcNAc...) asparagine glycan. The helical transmembrane segment at 411-435 (VHSVLVMGYGGLTSLFNLVVLAWAL) threads the bilayer. Topologically, residues 436–455 (WTLRRLRERADAPSVRACHD) are cytoplasmic. Residues 456-477 (TVTVLGLTVLLGTTWALAFFSF) form a helical membrane-spanning segment. Residues 478-481 (GVFL) are Extracellular-facing. The chain crosses the membrane as a helical span at residues 482–505 (LPQLFLFTILNSLYGFFLFLWFCS). Over 506–528 (QRCRSEAEAKAQIEAFSSSQTTQ) the chain is Cytoplasmic.

The protein belongs to the G-protein coupled receptor 2 family. Adhesion G-protein coupled receptor (ADGR) subfamily. In terms of assembly, heterodimer of 2 chains generated by proteolytic processing; the large extracellular N-terminal fragment and the membrane-bound C-terminal fragment predominantly remain associated and non-covalently linked. In terms of processing, autoproteolytically processed at the GPS region of the GAIN-B domain; this cleavage modulates receptor activity. N-glycsylated. Expressed in immune cells. Primarily found in granulocytes. Found in eosinophils.

It is found in the cell membrane. Its activity is regulated as follows. Forms a heterodimer of 2 chains generated by proteolytic processing that remain associated through non-covalent interactions mediated by the GAIN-B domain. In the inactivated receptor, the Stachel sequence (also named stalk) is embedded in the GAIN-B domain, where it adopts a beta-strand conformation. On activation, the Stachel moves into the 7 transmembrane region and adopts a twisted hook-shaped configuration that forms contacts within the receptor, leading to coupling of a G-alpha protein, which activates signaling. The cleaved GAIN-B and N-terminal domains can then dissociate from the rest of the receptor. Functionally, orphan adhesion G-protein coupled receptor (aGPCR). Ligand binding causes a conformation change that triggers signaling via guanine nucleotide-binding proteins (G proteins) and modulates the activity of downstream effectors, such as adenylate cyclase. ADGRG5 is specifically coupled to G(s) G proteins and mediates activation of adenylate cyclase activity. The polypeptide is Adhesion G-protein coupled receptor G5 (Homo sapiens (Human)).